Here is a 66-residue protein sequence, read N- to C-terminus: Large ribosomal subunit protein uL29 (66 aa).

This sequence belongs to the universal ribosomal protein uL29 family.

The sequence is that of Large ribosomal subunit protein uL29 from Rhizobium etli (strain ATCC 51251 / DSM 11541 / JCM 21823 / NBRC 15573 / CFN 42).